Consider the following 412-residue polypeptide: Serine hydroxymethyltransferase (412 aa).

Residues Leu117 and 121-123 (GHL) contribute to the (6S)-5,6,7,8-tetrahydrofolate site. N6-(pyridoxal phosphate)lysine is present on Lys226. 349-351 (SPF) is a (6S)-5,6,7,8-tetrahydrofolate binding site.

The protein belongs to the SHMT family. In terms of assembly, homodimer. Requires pyridoxal 5'-phosphate as cofactor.

It is found in the cytoplasm. The catalysed reaction is (6R)-5,10-methylene-5,6,7,8-tetrahydrofolate + glycine + H2O = (6S)-5,6,7,8-tetrahydrofolate + L-serine. It participates in one-carbon metabolism; tetrahydrofolate interconversion. It functions in the pathway amino-acid biosynthesis; glycine biosynthesis; glycine from L-serine: step 1/1. Catalyzes the reversible interconversion of serine and glycine with tetrahydrofolate (THF) serving as the one-carbon carrier. This reaction serves as the major source of one-carbon groups required for the biosynthesis of purines, thymidylate, methionine, and other important biomolecules. Also exhibits THF-independent aldolase activity toward beta-hydroxyamino acids, producing glycine and aldehydes, via a retro-aldol mechanism. The chain is Serine hydroxymethyltransferase from Lawsonia intracellularis (strain PHE/MN1-00).